Reading from the N-terminus, the 575-residue chain is Beta-amylase 1, chloroplastic (575 aa).

Residues 1–41 constitute a chloroplast transit peptide; it reads MALNLSHQLGVLAGTPIKSGEMTDSSLLSISPPSARMMTPK. 2 positions are modified to phosphoserine: Ser-55 and Ser-59. Cysteines 73 and 511 form a disulfide. Residues Asp-147, His-187, and Asp-195 each coordinate substrate. Catalysis depends on Glu-279, which acts as the Proton donor. Positions 392, 397, and 439 each coordinate substrate. Residue Glu-477 is the Proton acceptor of the active site. Substrate is bound by residues 478 to 479 and Arg-517; that span reads NA.

Belongs to the glycosyl hydrolase 14 family. Expressed in leaves, roots, flowers, pollen, and seeds.

The protein resides in the plastid. It is found in the chloroplast. It catalyses the reaction Hydrolysis of (1-&gt;4)-alpha-D-glucosidic linkages in polysaccharides so as to remove successive maltose units from the non-reducing ends of the chains.. Redox regulation; active in reducing conditions, inactive in oxidizing conditions. Thioredoxins f1, m1, and y1 mediate the reversible reductive activation of oxidized BAM1. Its function is as follows. Beta-amylase activity. Can use p-nitrophenyl maltopentaoside (PNPG5) as substrate only in reduced form. Can play a minor role in the starch degradation and maltose metabolism in chloroplasts during the night. More active on phosphorylated glucan. Interacts directly with starch or other alpha-1,4-glucan. This Arabidopsis thaliana (Mouse-ear cress) protein is Beta-amylase 1, chloroplastic (BAM1).